The chain runs to 896 residues: Desmocollin-3 (896 aa).

Positions 1–26 (MAAPGSGAPCAELCRQLLLTLVVFSF) are cleaved as a signal peptide. Residues 27–134 (ACEACKKEIF…KETVLRRSKR (108 aa)) constitute a propeptide that is removed on maturation. 5 Cadherin domains span residues 135–242 (RWAP…HPIF), 243–354 (TEAV…LPTF), 355–471 (RQNA…GPEC), 472–579 (SPEV…EILQ), and 580–690 (DYLV…ILGK). Over 135–690 (RWAPIPCSMQ…RRSADVILGK (556 aa)) the chain is Extracellular. Asn-165 carries an N-linked (GlcNAc...) asparagine glycan. Residues Asn-391, Asn-546, and Asn-629 are each glycosylated (N-linked (GlcNAc...) asparagine). The chain crosses the membrane as a helical span at residues 691–711 (WAILAILLGIALLFSILLTLV). The Cytoplasmic portion of the chain corresponds to 712–896 (CGIVSARNKK…AALAKTCTKR (185 aa)).

In terms of assembly, may form homodimers. Interacts with DSG1; there is evidence to suggest that the interaction promotes cell-cell adhesion of keratinocytes. Expressed in stratified epithelia only, such as the epidermis, tongue, esophagus and rumen (at protein level).

It localises to the cell membrane. Its subcellular location is the cell junction. The protein localises to the desmosome. The protein resides in the cytoplasm. A component of desmosome cell-cell junctions which are required for positive regulation of cellular adhesion. Required for cell-cell adhesion in the epidermis, as a result required for the maintenance of the dermal cohesion and the dermal barrier function. Required for cell-cell adhesion of epithelial cell layers surrounding the telogen hair club, as a result plays an important role in telogen hair shaft anchorage. Essential for successful completion of embryo compaction and embryo development. This chain is Desmocollin-3 (DSC3), found in Bos taurus (Bovine).